Consider the following 377-residue polypeptide: DNA replication and repair protein RecF (377 aa).

An ATP-binding site is contributed by 30–37 (GPNGQGKT).

The protein belongs to the RecF family.

The protein resides in the cytoplasm. Its function is as follows. The RecF protein is involved in DNA metabolism; it is required for DNA replication and normal SOS inducibility. RecF binds preferentially to single-stranded, linear DNA. It also seems to bind ATP. This chain is DNA replication and repair protein RecF, found in Thermobifida fusca (strain YX).